The following is a 361-amino-acid chain: MDSLTLFFTGALVAVGIYWFLCVLGPAERKGKRAVDLSGGSISAEKVQDNYKQYWSFFRRPKEIETAEKVPDFVDTFYNLVTDIYEWGWGQSFHFSPSIPGKSHKDATRLHEEMAVDLIQVKPGQKILDVGCGVGGPMRAIASHSRANVVGITINEYQVNRARLHNKKAGLDALCEVVCGNFLQMPFDDNSFDGAYSIEATCHAPKLEEVYAEIYRVLKPGSMYVSYEWVTTEKFKAEDDEHVEVIQGIERGDALPGLRAYVDIAETAKKVGFEIVKEKDLASPPAEPWWTRLKMGRLAYWRNHIVVQILSAVGVAPKGTVDVHEMLFKTADYLTRGGETGIFSPMHMILCRKPESPEESS.

The protein belongs to the class I-like SAM-binding methyltransferase superfamily. Erg6/SMT family.

The enzyme catalyses 24-methylidenelophenol + S-adenosyl-L-methionine = (Z)-24-ethylidenelophenol + S-adenosyl-L-homocysteine + H(+). It participates in steroid biosynthesis; sterol biosynthesis. Its function is as follows. Catalyzes the methyl transfer from S-adenosyl-methionine to the methylene group of 24-methylene lophenol to form 24-ethylidene lophenol. In Arabidopsis thaliana (Mouse-ear cress), this protein is 24-methylenesterol C-methyltransferase 2 (SMT2).